Consider the following 399-residue polypeptide: Nicotinate phosphoribosyltransferase (399 aa).

Residue H217 is modified to Phosphohistidine; by autocatalysis.

Belongs to the NAPRTase family. Transiently phosphorylated on a His residue during the reaction cycle. Phosphorylation strongly increases the affinity for substrates and increases the rate of nicotinate D-ribonucleotide production. Dephosphorylation regenerates the low-affinity form of the enzyme, leading to product release.

The enzyme catalyses nicotinate + 5-phospho-alpha-D-ribose 1-diphosphate + ATP + H2O = nicotinate beta-D-ribonucleotide + ADP + phosphate + diphosphate. It participates in cofactor biosynthesis; NAD(+) biosynthesis; nicotinate D-ribonucleotide from nicotinate: step 1/1. Its function is as follows. Catalyzes the synthesis of beta-nicotinate D-ribonucleotide from nicotinate and 5-phospho-D-ribose 1-phosphate at the expense of ATP. The chain is Nicotinate phosphoribosyltransferase from Burkholderia mallei (strain ATCC 23344).